The primary structure comprises 884 residues: Nonsense-mediated mRNA decay factor EBS1 (884 aa).

Disordered regions lie at residues 596–645 (NSMK…PTMG) and 755–774 (QGGL…NSAY). Residues 633–645 (RSSSLDSFSPTMG) show a composition bias toward polar residues. Residues 760-772 (SSQQPSSMSSLNS) are compositionally biased toward low complexity.

Belongs to the EST1 family. As to quaternary structure, interacts with NMD helicase UPF1. Interacts with CDC33.

It is found in the nucleus. It localises to the chromosome. The protein resides in the telomere. Its subcellular location is the cytoplasm. The protein localises to the P-body. Functionally, plays a role in nonsense-mediated mRNA decay (NMD). Recruits UPF1 to cytoplasmic mRNA decay bodies (P-bodies). Negative regulator of gene expression. Inhibits translation most likely through effects on eIF-4E (CDC33). Involved in telomere maintenance. The sequence is that of Nonsense-mediated mRNA decay factor EBS1 from Saccharomyces cerevisiae (strain ATCC 204508 / S288c) (Baker's yeast).